We begin with the raw amino-acid sequence, 618 residues long: Structural protein ORF618 (618 aa).

Positions Ile-570–Ala-598 form a coiled coil.

It is found in the virion. This is Structural protein ORF618 from Acidianus two-tailed virus (ATV).